The sequence spans 400 residues: Subtilisin-like protease CPC735_013700 (400 aa).

An N-terminal signal peptide occupies residues 1 to 19 (MGFVKILSLSLAATAVADA). A propeptide spanning residues 20–116 (ATILSPRYPN…IEPNQIVTIS (97 aa)) is cleaved from the precursor. In terms of domain architecture, Inhibitor I9 spans 36-115 (YIVVMKDGVS…FIEPNQIVTI (80 aa)). One can recognise a Peptidase S8 domain in the interval 126–400 (SWGLPRISVK…RKLLYNNSGK (275 aa)). Catalysis depends on charge relay system residues Asp161 and His192. An N-linked (GlcNAc...) asparagine glycan is attached at Asn252. Catalysis depends on Ser346, which acts as the Charge relay system. Asn396 is a glycosylation site (N-linked (GlcNAc...) asparagine).

The protein belongs to the peptidase S8 family.

It localises to the secreted. Functionally, secreted subtilisin-like serine protease with keratinolytic activity that contributes to pathogenicity. This chain is Subtilisin-like protease CPC735_013700, found in Coccidioides posadasii (strain C735) (Valley fever fungus).